Here is a 226-residue protein sequence, read N- to C-terminus: MHLLIAAAGSGKRMGANCNKLLLKVAGRSVLAWTLDAVKRSNSISWIGIVGQPSDKEAIVSIFDECALQAKWINGGDSRQESVQLGLEGLPLDAKHVLIHDGARCLVEPELFDKCSEMLRQGVSVIAATPVIDTIKKVSLDGFINKTFNRAELWAAQTPQGFNVEQLRQGHKKALVNNWTVTDDASLFEKLGWPVKILESSPSNIKVTTPFDLLIADALLSSRGAD.

This sequence belongs to the IspD/TarI cytidylyltransferase family. IspD subfamily.

The catalysed reaction is 2-C-methyl-D-erythritol 4-phosphate + CTP + H(+) = 4-CDP-2-C-methyl-D-erythritol + diphosphate. It participates in isoprenoid biosynthesis; isopentenyl diphosphate biosynthesis via DXP pathway; isopentenyl diphosphate from 1-deoxy-D-xylulose 5-phosphate: step 2/6. Its function is as follows. Catalyzes the formation of 4-diphosphocytidyl-2-C-methyl-D-erythritol from CTP and 2-C-methyl-D-erythritol 4-phosphate (MEP). The polypeptide is 2-C-methyl-D-erythritol 4-phosphate cytidylyltransferase (Prochlorococcus marinus (strain SARG / CCMP1375 / SS120)).